We begin with the raw amino-acid sequence, 193 residues long: Ferredoxin-2, mitochondrial (193 aa).

Residues 38-70 (QATPEKLETSNEEEGSSSAQITAGVESDAENQR) are disordered. In terms of domain architecture, 2Fe-2S ferredoxin-type spans 78 to 180 (VEVVFLDRSG…GAEFTLPKIT (103 aa)). [2Fe-2S] cluster-binding residues include Cys-115, Cys-121, Cys-124, and Cys-161.

The protein belongs to the adrenodoxin/putidaredoxin family. In terms of assembly, component of the mitochondrial core iron-sulfur cluster (ISC) complex composed of NFS1, LYRM4, NDUFAB1, ISCU, FXN, and FDX2; this complex is a heterohexamer containing two copies of each monomer. It depends on [2Fe-2S] cluster as a cofactor.

It is found in the mitochondrion. The protein localises to the mitochondrion matrix. Electron donor, of the core iron-sulfur cluster (ISC) assembly complex, that acts to reduce the persulfide into sulfide during [2Fe-2S] clusters assembly on the scaffolding protein ISCU. The core iron-sulfur cluster (ISC) assembly complex is involved in the de novo synthesis of a [2Fe-2S] cluster, the first step of the mitochondrial iron-sulfur protein biogenesis. This process is initiated by the cysteine desulfurase complex (NFS1:LYRM4:NDUFAB1) that produces persulfide which is delivered on the scaffold protein ISCU in a FXN-dependent manner. Then this complex is stabilized by FDX2 which provides reducing equivalents to accomplish the [2Fe-2S] cluster assembly. Finally, the [2Fe-2S] cluster is transferred from ISCU to chaperone proteins, including HSCB, HSPA9 and GLRX5. Essential for coenzyme Q biosynthesis: together with FDXR, transfers the electrons required for the hydroxylation reaction performed by COQ6. The chain is Ferredoxin-2, mitochondrial from Xenopus laevis (African clawed frog).